Here is a 633-residue protein sequence, read N- to C-terminus: MNAITFLGNSTMIPSQCILRAFTRISPSKYIRDTSFRSYPSRFSSCINQYRNADSDRIIRPTNAVPFCTDRQSSVTAQVVSEARSHSASTTCANDTTLDQIYTKNGLNVKPLVVERLKRDEKDEEAVNEDEEGVKRDGFEGVKCNDVEEEAWRLLRDSIVTYCDSPVGTVAAKDPTDTTPSNYDQVFIRDFVPSALAFLLKGESEIVRNFLLHTLQLQSWEKTVDCYSPGQGLMPASFKVRTLPLEEDKFEEVLDPDFGEAAIGRVAPVDSGLWWIILLRAYGKITGDYSLQERIDVQTGIKMIANLCLADGFDMFPTLLVTDGSCMIDRRMGIHGHPLEIQALFYSALRSSREMITVNDSSKNIIKTISNRLSALSFHIRENYWVDKNKINEIYRYKTEEYSMDATNKFNIYPEQVSPWLMDWVPESPDSGFLIGNLQPAHMDFRFFTLGNLWSIISSLGTPKQNQAILNLVEEKWDDLVGHMPLKICYPALESSEWHIITGSDPKNTPWSYHNGGSWPTLLWQFTLACIKMGRPELAEKAVTLAEKRLQADRWPEYYDTRDGKFIGKQSRLYQTWTIAGFLTSKQLLQNPEIASSLFWEEDLELLESCVCVLTKSGRKKCSRAAAKSQILI.

A chloroplast-targeting transit peptide spans 1–71 (MNAITFLGNS…TNAVPFCTDR (71 aa)). The residue at position 623 (serine 623) is a Phosphoserine.

This sequence belongs to the glycosyl hydrolase 100 family. Expressed in flowers.

The protein localises to the plastid. Its subcellular location is the chloroplast. It carries out the reaction Hydrolysis of terminal non-reducing beta-D-fructofuranoside residues in beta-D-fructofuranosides.. Chloroplastic invertase that cleaves sucrose into glucose and fructose and may participate in the carbon flux between the cytosol and plastids in leaves. The protein is Probable alkaline/neutral invertase A, chloroplastic of Arabidopsis thaliana (Mouse-ear cress).